We begin with the raw amino-acid sequence, 379 residues long: Chaperone protein DnaJ (379 aa).

One can recognise a J domain in the interval 5-70 (DYYEVLGVQK…QKRAAYDRFG (66 aa)). The segment at 137-215 (GATTTVRVPT…CGGQGRVRKE (79 aa)) adopts a CR-type zinc-finger fold. 8 residues coordinate Zn(2+): Cys150, Cys153, Cys167, Cys170, Cys189, Cys192, Cys203, and Cys206. 4 CXXCXGXG motif repeats span residues 150 to 157 (CESCNGTG), 167 to 174 (CPTCNGHG), 189 to 196 (CPACHGVG), and 203 to 210 (CRTCGGQG).

Belongs to the DnaJ family. As to quaternary structure, homodimer. Zn(2+) serves as cofactor.

Its subcellular location is the cytoplasm. Functionally, participates actively in the response to hyperosmotic and heat shock by preventing the aggregation of stress-denatured proteins and by disaggregating proteins, also in an autonomous, DnaK-independent fashion. Unfolded proteins bind initially to DnaJ; upon interaction with the DnaJ-bound protein, DnaK hydrolyzes its bound ATP, resulting in the formation of a stable complex. GrpE releases ADP from DnaK; ATP binding to DnaK triggers the release of the substrate protein, thus completing the reaction cycle. Several rounds of ATP-dependent interactions between DnaJ, DnaK and GrpE are required for fully efficient folding. Also involved, together with DnaK and GrpE, in the DNA replication of plasmids through activation of initiation proteins. This Rhodospirillum centenum (strain ATCC 51521 / SW) protein is Chaperone protein DnaJ.